The chain runs to 368 residues: Agmatine deiminase (368 aa).

Cys357 serves as the catalytic Amidino-cysteine intermediate.

The protein belongs to the agmatine deiminase family. In terms of assembly, homodimer.

The catalysed reaction is agmatine + H2O = N-carbamoylputrescine + NH4(+). The protein operates within amine and polyamine biosynthesis; putrescine biosynthesis via agmatine pathway; N-carbamoylputrescine from agmatine: step 1/1. Mediates the hydrolysis of agmatine into N-carbamoylputrescine in the arginine decarboxylase (ADC) pathway of putrescine biosynthesis, a basic polyamine. The sequence is that of Agmatine deiminase from Ectopseudomonas mendocina (strain ymp) (Pseudomonas mendocina).